Consider the following 213-residue polypeptide: 3,4-dihydroxy-2-butanone 4-phosphate synthase (213 aa).

D-ribulose 5-phosphate is bound by residues Arg37–Glu38, Asp42, Arg150–Thr154, and Glu174. Residue Glu38 coordinates Mg(2+). His153 contacts Mg(2+).

The protein belongs to the DHBP synthase family. Homodimer. Requires Mg(2+) as cofactor. The cofactor is Mn(2+).

It catalyses the reaction D-ribulose 5-phosphate = (2S)-2-hydroxy-3-oxobutyl phosphate + formate + H(+). Its pathway is cofactor biosynthesis; riboflavin biosynthesis; 2-hydroxy-3-oxobutyl phosphate from D-ribulose 5-phosphate: step 1/1. In terms of biological role, catalyzes the conversion of D-ribulose 5-phosphate to formate and 3,4-dihydroxy-2-butanone 4-phosphate. The polypeptide is 3,4-dihydroxy-2-butanone 4-phosphate synthase (Buchnera aphidicola subsp. Schizaphis graminum (strain Sg)).